The chain runs to 289 residues: Probable prolyl 4-hydroxylase 10 (289 aa).

A helical; Signal-anchor for type II membrane protein membrane pass occupies residues Leu-20–Ile-40. Topologically, residues Leu-41 to Val-289 are lumenal. The Fe2OG dioxygenase domain occupies His-161–Val-284. 2 residues coordinate Fe cation: His-179 and Asp-181. Asn-220 is a glycosylation site (N-linked (GlcNAc...) asparagine). Residue His-265 coordinates Fe cation. Lys-275 contacts 2-oxoglutarate.

It belongs to the P4HA family. Fe(2+) serves as cofactor. The cofactor is L-ascorbate.

The protein resides in the endoplasmic reticulum membrane. It catalyses the reaction L-prolyl-[collagen] + 2-oxoglutarate + O2 = trans-4-hydroxy-L-prolyl-[collagen] + succinate + CO2. Catalyzes the post-translational formation of 4-hydroxyproline in -Xaa-Pro-Gly- sequences in proline-rich peptide sequences of plant glycoproteins and other proteins. Hydroxyprolines are important constituent of many plant cell wall glycoproteins such as extensins, hydroxyproline-rich glycoproteins, lectins and arabinogalactan proteins. In Arabidopsis thaliana (Mouse-ear cress), this protein is Probable prolyl 4-hydroxylase 10.